Here is a 185-residue protein sequence, read N- to C-terminus: Kappa-casein (185 aa).

Residues 1 to 20 (MKSFFLVVNILALTLPFLGA) form the signal peptide. Threonine 143 is a glycosylation site (O-linked (GalNAc...) threonine). The residue at position 161 (serine 161) is a Phosphoserine; alternate. A glycan (O-linked (GalNAc...) serine; alternate) is linked at serine 161. Residue threonine 178 is glycosylated (O-linked (GalNAc...) threonine). Position 179 is a phosphoserine (serine 179).

Belongs to the kappa-casein family. In terms of tissue distribution, mammary gland specific. Secreted in milk.

It localises to the secreted. Its function is as follows. Kappa-casein stabilizes micelle formation, preventing casein precipitation in milk. This Equus caballus (Horse) protein is Kappa-casein (CSN3).